A 160-amino-acid chain; its full sequence is Protransforming growth factor alpha (160 aa).

The signal sequence occupies residues 1–23 (MVPSAGQFALFALGILLAVCQAL). Residues 24 to 39 (ENSTSALSADPPIAAA) constitute a propeptide, removed in mature form. The Extracellular portion of the chain corresponds to 24-98 (ENSTSALSAD…AVVAASQKKQ (75 aa)). Asn25 is a glycosylation site (N-linked (GlcNAc...) asparagine). Residues 43–83 (HFNDCPDSHSQFCFHGTCRFLVQEDKPACVCHSGYVGARCE) enclose the EGF-like domain. Disulfide bonds link Cys47–Cys60, Cys55–Cys71, and Cys73–Cys82. A propeptide spans 90–160 (VVAASQKKQA…TACCHSETVV (71 aa)) (removed in mature form). Residues 99–124 (AITALVVVSIVALAVLIITCVLIHCC) traverse the membrane as a helical segment. Residues 125-160 (QVRKHCEWCRALICRHEKPSALLKGRTACCHSETVV) are Cytoplasmic-facing. S-palmitoyl cysteine attachment occurs at residues Cys153 and Cys154.

Interacts with the PDZ domains of MAGI3, SDCBP and SNTA1. The interaction with SDCBP, is required for the targeting to the cell surface. In the endoplasmic reticulum, in its immature form (i.e. with a prosegment and lacking full N-glycosylation), interacts with CNIH. In the Golgi apparatus, may form a complex with CNIH and GORASP2. Interacts (via cytoplasmic C-terminal domain) with NKD2.

Its subcellular location is the secreted. The protein localises to the extracellular space. It localises to the cell membrane. Its function is as follows. TGF alpha is a mitogenic polypeptide that is able to bind to the EGF receptor/EGFR and to act synergistically with TGF beta to promote anchorage-independent cell proliferation in soft agar. The sequence is that of Protransforming growth factor alpha (TGFA) from Sus scrofa (Pig).